We begin with the raw amino-acid sequence, 364 residues long: Variable large protein 21 (364 aa).

The N-terminal stretch at Met-1–Gly-26 is a signal peptide. Residue Cys-27 is the site of N-palmitoyl cysteine attachment. Cys-27 carries the S-diacylglycerol cysteine lipid modification.

The protein belongs to the variable large protein (Vlp) family. Alpha subfamily.

The protein localises to the cell outer membrane. In terms of biological role, the Vlp and Vsp proteins are antigenically distinct proteins, only one vlp or vsp gene is transcriptionally active at any one time. Switching between these genes is a mechanism of host immune response evasion. The sequence is that of Variable large protein 21 from Borrelia hermsii.